A 40-amino-acid chain; its full sequence is Photosystem II reaction center protein Y (40 aa).

A helical membrane pass occupies residues 5-23 (LVLVASPILLAVGWAGFNI).

It belongs to the PsbY family. In terms of assembly, PSII is composed of 1 copy each of membrane proteins PsbA, PsbB, PsbC, PsbD, PsbE, PsbF, PsbH, PsbI, PsbJ, PsbK, PsbL, PsbM, PsbT, PsbX, PsbY, PsbZ, Psb30/Ycf12, peripheral proteins PsbO, CyanoQ (PsbQ), PsbU, PsbV and a large number of cofactors. It forms dimeric complexes.

It is found in the cellular thylakoid membrane. Functionally, loosely associated component of the core of photosystem II (PSII), it is not always seen in crystals. PSII is a light-driven water plastoquinone oxidoreductase, using light energy to abstract electrons from H(2)O, generating a proton gradient subsequently used for ATP formation. In Synechococcus sp. (strain RCC307), this protein is Photosystem II reaction center protein Y.